The chain runs to 463 residues: Succinate--CoA ligase [ADP-forming] subunit beta, mitochondrial (463 aa).

The N-terminal 53 residues, 1 to 53 (MAASVFYGRLLAVATLRNHRPRTALGAAAQVLGSSGLFNNHGLQVQQQQQRNL), are a transit peptide targeting the mitochondrion. The ATP-grasp domain occupies 61–288 (MELLQEAGVS…SNSAYRQKKI (228 aa)). Position 78 is an N6-acetyllysine (K78). Y84 carries the post-translational modification Phosphotyrosine. K88 is subject to N6-acetyllysine; alternate. K88 carries the N6-succinyllysine; alternate modification. ATP contacts are provided by residues K98 and 105-107 (GRG). Residues K129, K139, K143, and K216 each carry the N6-acetyllysine modification. Residues N258 and D272 each contribute to the Mg(2+) site. The residue at position 279 (S279) is a Phosphoserine. Substrate is bound at residue N323. The residue at position 341 (T341) is a Phosphothreonine. At K368 the chain carries N6-acetyllysine. A substrate-binding site is contributed by 380–382 (GIM).

This sequence belongs to the succinate/malate CoA ligase beta subunit family. ATP-specific subunit beta subfamily. As to quaternary structure, heterodimer of an alpha and a beta subunit. The beta subunit determines specificity for ATP. Interacts with ALAS2. It depends on Mg(2+) as a cofactor.

The protein resides in the mitochondrion. The catalysed reaction is succinate + ATP + CoA = succinyl-CoA + ADP + phosphate. It participates in carbohydrate metabolism; tricarboxylic acid cycle; succinate from succinyl-CoA (ligase route): step 1/1. Functionally, ATP-specific succinyl-CoA synthetase functions in the citric acid cycle (TCA), coupling the hydrolysis of succinyl-CoA to the synthesis of ATP and thus represents the only step of substrate-level phosphorylation in the TCA. The beta subunit provides nucleotide specificity of the enzyme and binds the substrate succinate, while the binding sites for coenzyme A and phosphate are found in the alpha subunit. The chain is Succinate--CoA ligase [ADP-forming] subunit beta, mitochondrial from Macaca fascicularis (Crab-eating macaque).